The sequence spans 551 residues: Hydroxylamine reductase (551 aa).

Cysteine 3, cysteine 6, cysteine 18, and cysteine 25 together coordinate [2Fe-2S] cluster. Hybrid [4Fe-2O-2S] cluster-binding residues include histidine 249, glutamate 273, cysteine 317, cysteine 405, cysteine 433, cysteine 458, glutamate 492, and lysine 494. Cysteine 405 carries the cysteine persulfide modification.

This sequence belongs to the HCP family. [2Fe-2S] cluster serves as cofactor. It depends on hybrid [4Fe-2O-2S] cluster as a cofactor.

It is found in the cytoplasm. It catalyses the reaction A + NH4(+) + H2O = hydroxylamine + AH2 + H(+). Its function is as follows. Catalyzes the reduction of hydroxylamine to form NH(3) and H(2)O. In Edwardsiella ictaluri (strain 93-146), this protein is Hydroxylamine reductase.